Consider the following 647-residue polypeptide: DNA mismatch repair protein MutL (647 aa).

The tract at residues 389–423 (SESSVSSVANKQQPTVKQAKRSADDSDSEHGKLDY) is disordered. Residues 409–423 (RSADDSDSEHGKLDY) show a composition bias toward basic and acidic residues.

Belongs to the DNA mismatch repair MutL/HexB family.

This protein is involved in the repair of mismatches in DNA. It is required for dam-dependent methyl-directed DNA mismatch repair. May act as a 'molecular matchmaker', a protein that promotes the formation of a stable complex between two or more DNA-binding proteins in an ATP-dependent manner without itself being part of a final effector complex. This chain is DNA mismatch repair protein MutL, found in Streptococcus thermophilus (strain ATCC BAA-491 / LMD-9).